Reading from the N-terminus, the 428-residue chain is MCDVVLGSQWGDEGKGKLVDILCDDIDVCARCAGGNNAGHTIVVDGKKFDFHMLPSGLVNPKCQNLVGSGVVIHVPSFFEELKNIEEKGLHCRDRLKVSSRAHLVFDFHQRTDKLKEAELSENKKSIGTTGKGIGPTYSTKASRSGIRVHHLVNSNPEAWNEFKTRYMRLVESRQKRYGEFDYDYEAELAKYEKYREELRPFVVDSVEFMHEAIAQKKKILVEGANALMLDIDFGTYPYVTSSSTGIGGVLTGLGIPPKTIRNIYGVVKAYTTRVGEGPFPTEQLNSVGETLQDVGAEYGVTTGRKRRCGWLDLVVLKYSTLINGYTSLNITKLDVLDKFKEIQVGIAYKLNGKELKSFPEDLIDLGNVEVVYKTLPGWEQDITKIKKYEDLPENAKNYLKYIEDFLGVPIQWVGTGPARDSMLEKKI.

GTP contacts are provided by residues 11-17 (GDEGKGK) and 39-41 (GHT). Catalysis depends on aspartate 12, which acts as the Proton acceptor. 2 residues coordinate Mg(2+): aspartate 12 and glycine 39. Residues 12 to 15 (DEGK), 37 to 40 (NAGH), threonine 130, arginine 144, asparagine 226, threonine 241, and arginine 305 each bind IMP. Catalysis depends on histidine 40, which acts as the Proton donor. 301 to 307 (VTTGRKR) contributes to the substrate binding site. Residues arginine 307, 333–335 (KLD), and 415–417 (GTG) each bind GTP.

It belongs to the adenylosuccinate synthetase family. In terms of assembly, homodimer. Mg(2+) is required as a cofactor.

It localises to the cytoplasm. The enzyme catalyses IMP + L-aspartate + GTP = N(6)-(1,2-dicarboxyethyl)-AMP + GDP + phosphate + 2 H(+). Its pathway is purine metabolism; AMP biosynthesis via de novo pathway; AMP from IMP: step 1/2. Its function is as follows. Plays an important role in the de novo pathway and in the salvage pathway of purine nucleotide biosynthesis. Catalyzes the first committed step in the biosynthesis of AMP from IMP. This is Adenylosuccinate synthetase from Lodderomyces elongisporus (strain ATCC 11503 / CBS 2605 / JCM 1781 / NBRC 1676 / NRRL YB-4239) (Yeast).